The following is a 143-amino-acid chain: Cofilin (143 aa).

Positions G5–S137 constitute an ADF-H domain.

It belongs to the actin-binding proteins ADF family.

The protein resides in the cytoplasm. Its subcellular location is the cytoskeleton. It is found in the nucleus matrix. In terms of biological role, controls reversibly actin polymerization and depolymerization in a pH-sensitive manner. It has the ability to bind G- and F-actin in a 1:1 ratio of cofilin to actin. Binding to F-actin is regulated by tropomyosin. It is the major component of intranuclear and cytoplasmic actin rods. Required for accumulation of actin at the cell division site via depolymerizing actin at the cell ends. In association with myosin II has a role in the assembly of the contractile ring via severing actin filaments. Involved in the maintenance of the contractile ring once formed. In association with profilin and capping protein, has a role in the mitotic reorganization of the actin cytoskeleton. This Ogataea parapolymorpha (strain ATCC 26012 / BCRC 20466 / JCM 22074 / NRRL Y-7560 / DL-1) (Yeast) protein is Cofilin (COF1).